The following is a 107-amino-acid chain: Phosphoribosyl-ATP pyrophosphatase (107 aa).

The protein belongs to the PRA-PH family.

It is found in the cytoplasm. The catalysed reaction is 1-(5-phospho-beta-D-ribosyl)-ATP + H2O = 1-(5-phospho-beta-D-ribosyl)-5'-AMP + diphosphate + H(+). The protein operates within amino-acid biosynthesis; L-histidine biosynthesis; L-histidine from 5-phospho-alpha-D-ribose 1-diphosphate: step 2/9. The polypeptide is Phosphoribosyl-ATP pyrophosphatase (Novosphingobium aromaticivorans (strain ATCC 700278 / DSM 12444 / CCUG 56034 / CIP 105152 / NBRC 16084 / F199)).